The sequence spans 400 residues: Acetate kinase (400 aa).

N10 contributes to the Mg(2+) binding site. An ATP-binding site is contributed by K17. Residue R91 coordinates substrate. The Proton donor/acceptor role is filled by D150. ATP is bound by residues 210-214 (HLGNG), 285-287 (DCR), and 333-337 (GIGEN). E387 is a Mg(2+) binding site.

This sequence belongs to the acetokinase family. Homodimer. The cofactor is Mg(2+). Mn(2+) serves as cofactor.

The protein resides in the cytoplasm. It catalyses the reaction acetate + ATP = acetyl phosphate + ADP. It participates in metabolic intermediate biosynthesis; acetyl-CoA biosynthesis; acetyl-CoA from acetate: step 1/2. Its function is as follows. Catalyzes the formation of acetyl phosphate from acetate and ATP. Can also catalyze the reverse reaction. In Photorhabdus laumondii subsp. laumondii (strain DSM 15139 / CIP 105565 / TT01) (Photorhabdus luminescens subsp. laumondii), this protein is Acetate kinase.